A 264-amino-acid polypeptide reads, in one-letter code: Alkaline ceramidase 1 (264 aa).

Over 1–27 (MPSIFAYQSSEVDWCESNFQYSELVAE) the chain is Lumenal. Ca(2+) contacts are provided by Asp13, Trp14, Glu16, Asn18, and Glu27. A helical transmembrane segment spans residues 28 to 48 (FYNTFSNIPFFIFGPLMMLLM). The Cytoplasmic portion of the chain corresponds to 49–57 (HPYAQKRSR). A helical transmembrane segment spans residues 58-78 (YIYVVWVLFMIIGLFSMYFHM). Residue His77 participates in Zn(2+) binding. Residues 79 to 81 (TLS) lie on the Lumenal side of the membrane. A helical transmembrane segment spans residues 82 to 102 (FLGQLLDEIAILWLLGSGYSI). At 103–119 (WMPRCYFPSFLGGNRSQ) the chain is on the cytoplasmic side. The chain crosses the membrane as a helical span at residues 120–137 (FIRLVFITTVVSTLLSFL). A topological domain (lumenal) is located at residue Arg138. The helical transmembrane segment at 139–159 (PTVNAYALNSIALHILYIVCQ) threads the bilayer. Residues 160-176 (EYRKTSNKELRHLIEVS) are Cytoplasmic-facing. Residues 177 to 197 (VVLWAVALTSWISDRLLCSFW) traverse the membrane as a helical segment. Residues 198–206 (QRIHFFYLH) lie on the Lumenal side of the membrane. Residues His206 and His210 each contribute to the Zn(2+) site. A helical transmembrane segment spans residues 207–227 (SIWHVLISITFPYGMVTMALV). Topologically, residues 228–264 (DANYEMPGETLKVRYWPRDSWPVGLPYVEIRGDDKDC) are cytoplasmic.

The protein belongs to the alkaline ceramidase family. Zn(2+) is required as a cofactor. In terms of tissue distribution, mainly expressed in epidermis.

The protein localises to the endoplasmic reticulum membrane. It catalyses the reaction an N-acylsphing-4-enine + H2O = sphing-4-enine + a fatty acid. The catalysed reaction is N-tetracosanoyl-sphing-4-enine + H2O = tetracosanoate + sphing-4-enine. The enzyme catalyses an N-acylsphinganine + H2O = sphinganine + a fatty acid. It carries out the reaction N-(9Z-octadecenoyl)-sphing-4-enine + H2O = sphing-4-enine + (9Z)-octadecenoate. It catalyses the reaction N-(15Z-tetracosenoyl)-sphing-4-enine + H2O = (15Z)-tetracosenoate + sphing-4-enine. It functions in the pathway lipid metabolism; sphingolipid metabolism. Its activity is regulated as follows. Inhibited by sphingosine. Activity is Ca(2+)-dependent. In terms of biological role, endoplasmic reticulum ceramidase that catalyzes the hydrolysis of ceramides into sphingosine and free fatty acids at alkaline pH. Ceramides, sphingosine, and its phosphorylated form sphingosine-1-phosphate are bioactive lipids that mediate cellular signaling pathways regulating several biological processes including cell proliferation, apoptosis and differentiation. Exhibits a strong substrate specificity towards the natural stereoisomer of ceramides with D-erythro-sphingosine as a backbone and has a higher activity towards very long-chain unsaturated fatty acids like the C24:1-ceramide. May also hydrolyze dihydroceramides to produce dihydrosphingosine. ACER1 is a skin-specific ceramidase that regulates the levels of ceramides, sphingosine and sphingosine-1-phosphate in the epidermis, mediates the calcium-induced differentiation of epidermal keratinocytes and more generally plays an important role in skin homeostasis. This is Alkaline ceramidase 1 from Homo sapiens (Human).